We begin with the raw amino-acid sequence, 142 residues long: Transcriptional regulator MraZ (142 aa).

SpoVT-AbrB domains follow at residues 5–47 (THTP…PTET) and 76–119 (ASDT…DATE).

Belongs to the MraZ family. Forms oligomers.

It is found in the cytoplasm. The protein resides in the nucleoid. The chain is Transcriptional regulator MraZ from Cutibacterium acnes (strain DSM 16379 / KPA171202) (Propionibacterium acnes).